Reading from the N-terminus, the 441-residue chain is Ribosomal protein uS12 methylthiotransferase RimO (441 aa).

An MTTase N-terminal domain is found at 8 to 118; sequence PKIGFVSLGC…VLQHVHHYVP (111 aa). Residues Cys-17, Cys-53, Cys-82, Cys-150, Cys-154, and Cys-157 each coordinate [4Fe-4S] cluster. The Radical SAM core domain occupies 136–373; the sequence is LTPRHYAYLK…MQLQQQISAE (238 aa). One can recognise a TRAM domain in the interval 376–441; sequence QEKVGREILV…DEYDLWGSRV (66 aa).

The protein belongs to the methylthiotransferase family. RimO subfamily. [4Fe-4S] cluster is required as a cofactor.

It localises to the cytoplasm. The catalysed reaction is L-aspartate(89)-[ribosomal protein uS12]-hydrogen + (sulfur carrier)-SH + AH2 + 2 S-adenosyl-L-methionine = 3-methylsulfanyl-L-aspartate(89)-[ribosomal protein uS12]-hydrogen + (sulfur carrier)-H + 5'-deoxyadenosine + L-methionine + A + S-adenosyl-L-homocysteine + 2 H(+). Its function is as follows. Catalyzes the methylthiolation of an aspartic acid residue of ribosomal protein uS12. In Salmonella paratyphi A (strain ATCC 9150 / SARB42), this protein is Ribosomal protein uS12 methylthiotransferase RimO.